The chain runs to 200 residues: MTSKIFSPKISAVIESLRKLPTIGKKSSQRLALYLLDKSPETAIAIANSLLDATANIKKCVYCQALTEDDVCNICSNTNRDDTKLCIIESMLDMIAIEEAGIYRGKYFVLNGRISPLDGIGPSELKLDILQQIIADRKIDEVILAISPTVEGETTAHFISQMIAKDIKISRIGFGVPFGGELEYLDQQTLLHAFNARTNI.

The C4-type zinc-finger motif lies at 60 to 75; the sequence is CVYCQALTEDDVCNIC. The Toprim domain maps to 83–177; the sequence is TKLCIIESML…KISRIGFGVP (95 aa).

The protein belongs to the RecR family.

Functionally, may play a role in DNA repair. It seems to be involved in an RecBC-independent recombinational process of DNA repair. It may act with RecF and RecO. This is Recombination protein RecR from Francisella tularensis subsp. tularensis (strain WY96-3418).